We begin with the raw amino-acid sequence, 1174 residues long: Tight junction protein 2 (1174 aa).

In terms of domain architecture, PDZ 1 spans 10–97 (TVTLQKDSKR…IAAIVVKRPR (88 aa)). Ser-107, Ser-127, Ser-130, Ser-140, Ser-145, Ser-147, Ser-151, Ser-173, Ser-195, and Ser-217 each carry phosphoserine. Over residues 125 to 137 (GRSARSGYSERSR) the composition is skewed to basic and acidic residues. The interval 125-290 (GRSARSGYSE…AGQPDSDRPI (166 aa)) is disordered. Residues 146–214 (RSWEDSPERG…DYGRPGERSH (69 aa)) show a composition bias toward basic and acidic residues. A compositionally biased stretch (basic and acidic residues) spans 220–235 (RGYDRGYDRGYDRGYD). Position 239 is a phosphoserine (Ser-239). Composition is skewed to basic and acidic residues over residues 243–266 (EYGR…EHLR) and 274–288 (LRGR…DSDR). A PDZ 2 domain is found at 291-369 (GVLLMKSKAN…KLQLVVLRDS (79 aa)). Phosphoserine occurs at positions 309, 382, 384, 390, 399, 408, 414, and 415. Residues 391 to 430 (EIESNRSFSPEERRQQYSDYDYHSSNEKLKERPNSREDMQ) are disordered. The segment covering 399–430 (SPEERRQQYSDYDYHSSNEKLKERPNSREDMQ) has biased composition (basic and acidic residues). Thr-439 bears the Phosphothreonine mark. Residues 456–490 (ENSKEPRYQEEPPAPQPKAAPRTFLRPSPEDEAIY) are disordered. Ser-483 is subject to Phosphoserine. Residues 493–574 (NTKMVRFKKG…GEMVTILAQS (82 aa)) form the PDZ 3 domain. Phosphotyrosine is present on Tyr-558. An SH3 domain is found at 588–653 (GDSFFIRSHF…PNKSRAEQMA (66 aa)). One can recognise a Guanylate kinase-like domain in the interval 679–860 (MKKNLRKSRE…WFGSLKDTIQ (182 aa)). 2 positions are modified to phosphoserine: Ser-686 and Ser-886. Residue Thr-889 is modified to Phosphothreonine. Ser-897 and Ser-904 each carry phosphoserine. 2 disordered regions span residues 904 to 1065 (SDFE…VLGK) and 1100 to 1174 (DIYA…DTEL). Thr-909 and Thr-917 each carry phosphothreonine. Residues 940 to 951 (VQHEESIRKPSP) show a composition bias toward basic and acidic residues. Ser-950, Ser-962, Ser-970, Ser-990, and Ser-1052 each carry phosphoserine. The span at 978-1000 (EPPKAKTQNREESFDISRSHDYK) shows a compositional bias: basic and acidic residues. A compositionally biased stretch (acidic residues) spans 1044 to 1056 (ESEEVGEGSEEQE). Tyr-1102 carries the phosphotyrosine modification. A phosphoserine mark is found at Ser-1131 and Ser-1143. Residues 1150-1159 (YRQQLSEHSK) show a composition bias toward basic and acidic residues. Positions 1172-1174 (TEL) are interaction with SCRIB.

The protein belongs to the MAGUK family. Homodimer. Interacts (via PDZ2 domain) with TJP1/ZO1 (via PDZ2 domain). Interacts with UBN1. Interacts with SCRIB. Interacts with OCLN. Interacts with SAFB in the nucleus. Interacts with USP53 (via the C-terminal region). Interacts with claudins, including CLDN1, CLDN2, CLDN3, CLDN5 and CLDN7. Interacts with CLDN18. Interacts (via N-terminus) with CTNNA1. Phosphorylated.

The protein resides in the cell junction. The protein localises to the adherens junction. It is found in the cell membrane. It localises to the nucleus. Its subcellular location is the tight junction. Its function is as follows. Plays a role in tight junctions and adherens junctions. Acts as a positive regulator of RANKL-induced osteoclast differentiation, potentially via mediating downstream transcriptional activity. The chain is Tight junction protein 2 from Canis lupus familiaris (Dog).